The following is a 176-amino-acid chain: dCTP deaminase (176 aa).

DCTP is bound by residues 102–107 and aspartate 118; that span reads RSTFAR. The active-site Proton donor/acceptor is glutamate 128. DCTP contacts are provided by tyrosine 160, lysine 166, and glutamine 167.

Belongs to the dCTP deaminase family. As to quaternary structure, homotrimer.

The enzyme catalyses dCTP + H2O + H(+) = dUTP + NH4(+). The protein operates within pyrimidine metabolism; dUMP biosynthesis; dUMP from dCTP (dUTP route): step 1/2. Functionally, catalyzes the deamination of dCTP to dUTP. In Staphylothermus marinus (strain ATCC 43588 / DSM 3639 / JCM 9404 / F1), this protein is dCTP deaminase.